A 461-amino-acid chain; its full sequence is Protein naked cuticle homolog 2 (461 aa).

A disordered region spans residues 1-106 (MGKFQSKHAA…DGEKAASREG (106 aa)). G2 carries the N-myristoyl glycine lipid modification. 2 stretches are compositionally biased toward basic and acidic residues: residues 34 to 73 (RGAEETDRRAGSGVEHRSRDKQELLNGDPKEGPFWDDKGS) and 97 to 106 (DGEKAASREG). The segment at 121 to 186 (QCDVSVEEDN…LRVKLTVSPE (66 aa)) is interaction with DVL1, DVL2 and DVL3. Residues 127–162 (EEDNRQEWTFTLYDFDNSGKVTREDMSSLMHTIYEV) enclose the EF-hand domain. Ca(2+) contacts are provided by D140, D142, S144, K146, and D151. Disordered regions lie at residues 176 to 205 (TLRVKLTVSPEPSSKKECPLTGQDREPTRG), 263 to 302 (YTSKFGPGSPPEQARQEHHGRATHIPSRSRSQESDAHAIH), 321 to 359 (TRALAAQPRIKGQEKQFLRSPKGPGKPLGTPGSGKPGKA), 372 to 414 (SAQD…GQPT), and 441 to 461 (HEHHHHHEHHHHHHHHHFHPS). A compositionally biased stretch (basic and acidic residues) spans 188 to 205 (SSKKECPLTGQDREPTRG). The tract at residues 307 to 396 (QVLAEHVIPA…PPQPYGHKRY (90 aa)) is interaction with TGFA. A compositionally biased stretch (low complexity) spans 341–350 (PKGPGKPLGT). Positions 380–390 (PQPPPQPPPQP) are enriched in pro residues.

The protein belongs to the NKD family. In terms of assembly, interacts with RNF25, TGFA (via cytoplasmic domain), and PPP2R3A. Interacts with DVL1, DVL2 and DVL3. Post-translationally, ubiquitinated, leading to rapid proteasomal degradation. Interaction with TGFA interferes with RNF25 binding and protects against ubiquitination mediated by RNF25. Expressed in the cecum, colon, esophagus, ileum, jejunum, skin and stomach.

Its subcellular location is the cell membrane. The protein resides in the cytoplasm. It is found in the cytoplasmic vesicle. Its function is as follows. Cell autonomous antagonist of the canonical Wnt signaling pathway. May activate a second Wnt signaling pathway that controls planar cell polarity. Required for processing of TGFA and for targeting of TGFA to the basolateral membrane of polarized epithelial cells. The sequence is that of Protein naked cuticle homolog 2 (Nkd2) from Mus musculus (Mouse).